The sequence spans 371 residues: Chorismate synthase (371 aa).

Residues R48 and R54 each contribute to the NADP(+) site. FMN is bound by residues 125 to 127 (RSS), 238 to 239 (NA), G278, 293 to 297 (KPTSS), and R319.

It belongs to the chorismate synthase family. As to quaternary structure, homotetramer. Requires FMNH2 as cofactor.

It carries out the reaction 5-O-(1-carboxyvinyl)-3-phosphoshikimate = chorismate + phosphate. The protein operates within metabolic intermediate biosynthesis; chorismate biosynthesis; chorismate from D-erythrose 4-phosphate and phosphoenolpyruvate: step 7/7. Its function is as follows. Catalyzes the anti-1,4-elimination of the C-3 phosphate and the C-6 proR hydrogen from 5-enolpyruvylshikimate-3-phosphate (EPSP) to yield chorismate, which is the branch point compound that serves as the starting substrate for the three terminal pathways of aromatic amino acid biosynthesis. This reaction introduces a second double bond into the aromatic ring system. The polypeptide is Chorismate synthase (Saccharophagus degradans (strain 2-40 / ATCC 43961 / DSM 17024)).